We begin with the raw amino-acid sequence, 658 residues long: NUAK family SNF1-like kinase 1 (658 aa).

Residue M1 is modified to N-acetylmethionine. Residues M1–K53 form a disordered region. Phosphoserine is present on S22. A compositionally biased stretch (basic residues) spans P40–K53. The Protein kinase domain occupies Y56–V307. Residues L62–V70 and K85 each bind ATP. The Proton acceptor role is filled by D179. The residue at position 212 (T212) is a Phosphothreonine; by LKB1. Disordered regions lie at residues L353–V422 and I441–R568. A compositionally biased stretch (polar residues) spans F378 to L393. The segment covering S394–R405 has biased composition (basic residues). The GILK motif signature appears at G400 to K403. S456 is subject to Phosphoserine. Residues S519 to S530 are compositionally biased toward basic residues. Positions S559–R568 are enriched in low complexity. A Phosphoserine; by PKB/AKT1 modification is found at S601.

The protein belongs to the protein kinase superfamily. CAMK Ser/Thr protein kinase family. SNF1 subfamily. In terms of assembly, interacts (via GILK motif) with PPP1CB; the interaction is direct and bridges NUAK1 and PPP1R12A. Interacts with CDKN1A. Requires Mg(2+) as cofactor. Phosphorylated at Thr-212 by STK11/LKB1 in complex with STE20-related adapter-alpha (STRADA) pseudo kinase and CAB39. Not dephosphorylated by the myosin PP1 complex when regulating its activity, due to the presence of PPP1R12A, which prevents myosin PP1 from dephosphorylating NUAK1. Phosphorylated by STK38L upon stimulation with IGF1. Post-translationally, ubiquitinated with 'Lys-29'- and 'Lys-33'-linked polyubiquitins which appear to impede LKB1-mediated phosphorylation. Deubiquitinated by USP9X. As to expression, expressed in the developing central nervous system, in epidermis, and some other tissues.

It is found in the nucleus. Its subcellular location is the cytoplasm. It catalyses the reaction L-seryl-[protein] + ATP = O-phospho-L-seryl-[protein] + ADP + H(+). The catalysed reaction is L-threonyl-[protein] + ATP = O-phospho-L-threonyl-[protein] + ADP + H(+). Its activity is regulated as follows. Activated by phosphorylation on Thr-212. Activated by phosphorylation at Ser-601 AKT1 during glucose starvation; the relevance of such activation in normal cells is however unsure. Its function is as follows. Serine/threonine-protein kinase involved in various processes such as cell adhesion, regulation of cell ploidy and senescence, cell proliferation and tumor progression. Phosphorylates ATM, CASP6, LATS1, PPP1R12A and p53/TP53. Acts as a regulator of cellular senescence and cellular ploidy by mediating phosphorylation of 'Ser-464' of LATS1, thereby controlling its stability. Controls cell adhesion by regulating activity of the myosin protein phosphatase 1 (PP1) complex. Acts by mediating phosphorylation of PPP1R12A subunit of myosin PP1: phosphorylated PPP1R12A then interacts with 14-3-3, leading to reduced dephosphorylation of myosin MLC2 by myosin PP1. May be involved in DNA damage response: phosphorylates p53/TP53 at 'Ser-15' and 'Ser-392' and is recruited to the CDKN1A/WAF1 promoter to participate in transcription activation by p53/TP53. May also act as a tumor malignancy-associated factor by promoting tumor invasion and metastasis under regulation and phosphorylation by AKT1. Suppresses Fas-induced apoptosis by mediating phosphorylation of CASP6, thereby suppressing the activation of the caspase and the subsequent cleavage of CFLAR. Regulates UV radiation-induced DNA damage response mediated by CDKN1A. In association with STK11, phosphorylates CDKN1A in response to UV radiation and contributes to its degradation which is necessary for optimal DNA repair. The sequence is that of NUAK family SNF1-like kinase 1 (Nuak1) from Mus musculus (Mouse).